The chain runs to 324 residues: Cuticle collagen sqt-1 (324 aa).

2 disordered regions span residues 68–108 and 129–324; these read RRQY…TPNG and SGPK…YRNI. The span at 87–97 shows a compositional bias: pro residues; the sequence is SAPPGQPPAVP. 3 triple-helical region regions span residues 127 to 153, 171 to 231, and 237 to 299; these read GPSGPKGVPGVPGLDGVPGLDGVPGVG, QGPV…KGRD, and GRPG…PGKD. Composition is skewed to low complexity over residues 129 to 156 and 177 to 201; these read SGPKGVPGVPGLDGVPGLDGVPGVGADD and PGALGRPGPRGLPGPRGQNGNPGRD. A compositionally biased stretch (basic and acidic residues) spans 227–236; that stretch reads EKGRDAEHPI.

The protein belongs to the cuticular collagen family. Collagen polypeptide chains are complexed within the cuticle by disulfide bonds and other types of covalent cross-links.

Functionally, nematode cuticles are composed largely of collagen-like proteins. The cuticle functions both as an exoskeleton and as a barrier to protect the worm from its environment. This is a collagen critical for organismal morphogenesis. Mutations in sqt-1 can lengthen, shorten, or helically twist the entire animal. The protein is Cuticle collagen sqt-1 (sqt-1) of Caenorhabditis elegans.